The primary structure comprises 343 residues: Glyceraldehyde-3-phosphate dehydrogenase (343 aa).

NAD(+)-binding positions include 13–14 and glycine 111; that span reads TI. 140–142 contacts D-glyceraldehyde 3-phosphate; it reads SCN. Cysteine 141 acts as the Nucleophile in catalysis. Residue arginine 169 coordinates NAD(+). 195-196 serves as a coordination point for D-glyceraldehyde 3-phosphate; the sequence is HA. Glutamine 303 is a binding site for NAD(+).

The protein belongs to the glyceraldehyde-3-phosphate dehydrogenase family. As to quaternary structure, homotetramer.

It is found in the cytoplasm. It catalyses the reaction D-glyceraldehyde 3-phosphate + phosphate + NADP(+) = (2R)-3-phospho-glyceroyl phosphate + NADPH + H(+). The catalysed reaction is D-glyceraldehyde 3-phosphate + phosphate + NAD(+) = (2R)-3-phospho-glyceroyl phosphate + NADH + H(+). It functions in the pathway carbohydrate degradation; glycolysis; pyruvate from D-glyceraldehyde 3-phosphate: step 1/5. The protein is Glyceraldehyde-3-phosphate dehydrogenase of Sulfurisphaera tokodaii (strain DSM 16993 / JCM 10545 / NBRC 100140 / 7) (Sulfolobus tokodaii).